A 235-amino-acid polypeptide reads, in one-letter code: Carboxy-S-adenosyl-L-methionine synthase (235 aa).

Residues Y35, 60 to 62 (GCS), 83 to 84 (DN), N124, and R191 each bind S-adenosyl-L-methionine.

Belongs to the class I-like SAM-binding methyltransferase superfamily. Cx-SAM synthase family. Homodimer.

The enzyme catalyses prephenate + S-adenosyl-L-methionine = carboxy-S-adenosyl-L-methionine + 3-phenylpyruvate + H2O. Its function is as follows. Catalyzes the conversion of S-adenosyl-L-methionine (SAM) to carboxy-S-adenosyl-L-methionine (Cx-SAM). The chain is Carboxy-S-adenosyl-L-methionine synthase from Campylobacter jejuni subsp. jejuni serotype O:23/36 (strain 81-176).